A 278-amino-acid polypeptide reads, in one-letter code: Diaminopimelate epimerase (278 aa).

Substrate-binding residues include N13 and N66. C75 acts as the Proton donor in catalysis. Substrate is bound by residues 76–77 (GN), N162, N195, and 213–214 (ER). Residue C222 is the Proton acceptor of the active site. 223-224 (GT) contacts substrate.

Belongs to the diaminopimelate epimerase family. Homodimer.

Its subcellular location is the cytoplasm. The enzyme catalyses (2S,6S)-2,6-diaminopimelate = meso-2,6-diaminopimelate. It functions in the pathway amino-acid biosynthesis; L-lysine biosynthesis via DAP pathway; DL-2,6-diaminopimelate from LL-2,6-diaminopimelate: step 1/1. Its function is as follows. Catalyzes the stereoinversion of LL-2,6-diaminopimelate (L,L-DAP) to meso-diaminopimelate (meso-DAP), a precursor of L-lysine and an essential component of the bacterial peptidoglycan. This chain is Diaminopimelate epimerase, found in Trichodesmium erythraeum (strain IMS101).